We begin with the raw amino-acid sequence, 600 residues long: ATP-dependent lipid A-core flippase (600 aa).

The next 6 helical transmembrane spans lie at 28–48 (TLSI…IAFI), 80–100 (VMLM…VANF), 159–179 (ALIS…LMFF), 182–202 (WKLS…ISIV), 267–287 (VSQP…LYAA), and 295–315 (ELTA…LQPI). The 299-residue stretch at 29–327 (LSILGLIVYG…LTRVNAEFQR (299 aa)) folds into the ABC transmembrane type-1 domain. The ABC transporter domain maps to 359–596 (LRFDNVSFSY…KGAYAGLYQM (238 aa)). An ATP-binding site is contributed by 393-400 (GRSGSGKS).

This sequence belongs to the ABC transporter superfamily. Lipid exporter (TC 3.A.1.106) family. In terms of assembly, homodimer.

It is found in the cell inner membrane. It carries out the reaction ATP + H2O + lipid A-core oligosaccharideSide 1 = ADP + phosphate + lipid A-core oligosaccharideSide 2.. Functionally, involved in lipopolysaccharide (LPS) biosynthesis. Translocates lipid A-core from the inner to the outer leaflet of the inner membrane. Transmembrane domains (TMD) form a pore in the inner membrane and the ATP-binding domain (NBD) is responsible for energy generation. The chain is ATP-dependent lipid A-core flippase from Shewanella denitrificans (strain OS217 / ATCC BAA-1090 / DSM 15013).